Here is a 281-residue protein sequence, read N- to C-terminus: ATP synthase gamma chain (281 aa).

This sequence belongs to the ATPase gamma chain family. F-type ATPases have 2 components, CF(1) - the catalytic core - and CF(0) - the membrane proton channel. CF(1) has five subunits: alpha(3), beta(3), gamma(1), delta(1), epsilon(1). CF(0) has three main subunits: a, b and c.

Its subcellular location is the cell inner membrane. In terms of biological role, produces ATP from ADP in the presence of a proton gradient across the membrane. The gamma chain is believed to be important in regulating ATPase activity and the flow of protons through the CF(0) complex. This chain is ATP synthase gamma chain, found in Ehrlichia chaffeensis (strain ATCC CRL-10679 / Arkansas).